A 411-amino-acid polypeptide reads, in one-letter code: Na(+)-translocating NADH-quinone reductase subunit F (411 aa).

Residues 5–25 (VILALGIAAFTVIVLVLVAII) traverse the membrane as a helical segment. A 2Fe-2S ferredoxin-type domain is found at 36-130 (GDITIDINDD…NMEVELPEEI (95 aa)). Residues C73, C79, C82, and C114 each coordinate [2Fe-2S] cluster. The region spanning 133 to 273 (VKKWECTVIS…SGPFGEFFAK (141 aa)) is the FAD-binding FR-type domain.

This sequence belongs to the NqrF family. In terms of assembly, composed of six subunits; NqrA, NqrB, NqrC, NqrD, NqrE and NqrF. [2Fe-2S] cluster serves as cofactor. The cofactor is FAD.

The protein resides in the cell inner membrane. It carries out the reaction a ubiquinone + n Na(+)(in) + NADH + H(+) = a ubiquinol + n Na(+)(out) + NAD(+). Functionally, NQR complex catalyzes the reduction of ubiquinone-1 to ubiquinol by two successive reactions, coupled with the transport of Na(+) ions from the cytoplasm to the periplasm. The first step is catalyzed by NqrF, which accepts electrons from NADH and reduces ubiquinone-1 to ubisemiquinone by a one-electron transfer pathway. The polypeptide is Na(+)-translocating NADH-quinone reductase subunit F (Haemophilus influenzae (strain 86-028NP)).